The primary structure comprises 90 residues: Probable Fe(2+)-trafficking protein (90 aa).

Belongs to the Fe(2+)-trafficking protein family.

Could be a mediator in iron transactions between iron acquisition and iron-requiring processes, such as synthesis and/or repair of Fe-S clusters in biosynthetic enzymes. The polypeptide is Probable Fe(2+)-trafficking protein (Xylella fastidiosa (strain 9a5c)).